Consider the following 843-residue polypeptide: Protein P (843 aa).

Residues 1 to 177 are terminal protein domain (TP); sequence MPLSYQHFRK…FCGSPYSWEQ (177 aa). Positions 178–346 are spacer; that stretch reads ELQHGRLVFQ…YCLTHIVNLL (169 aa). The interval 347–690 is polymerase/reverse transcriptase domain (RT); the sequence is EDWGPCTEHG…YLHLYPVARQ (344 aa). The Reverse transcriptase domain maps to 357–600; that stretch reads EHNIRIPRTP…YSLNFMGYVI (244 aa). Mg(2+) is bound by residues Asp-429, Asp-551, and Asp-552.

It belongs to the hepadnaviridae P protein family.

It catalyses the reaction DNA(n) + a 2'-deoxyribonucleoside 5'-triphosphate = DNA(n+1) + diphosphate. The enzyme catalyses Endonucleolytic cleavage to 5'-phosphomonoester.. With respect to regulation, activated by host HSP70 and HSP40 in vitro to be able to bind the epsilon loop of the pgRNA. Because deletion of the RNase H region renders the protein partly chaperone-independent, the chaperones may be needed indirectly to relieve occlusion of the RNA-binding site by this domain. Inhibited by several reverse-transcriptase inhibitors: Lamivudine, Adefovir and Entecavir. Multifunctional enzyme that converts the viral RNA genome into dsDNA in viral cytoplasmic capsids. This enzyme displays a DNA polymerase activity that can copy either DNA or RNA templates, and a ribonuclease H (RNase H) activity that cleaves the RNA strand of RNA-DNA heteroduplexes in a partially processive 3'- to 5'-endonucleasic mode. Neo-synthesized pregenomic RNA (pgRNA) are encapsidated together with the P protein, and reverse-transcribed inside the nucleocapsid. Initiation of reverse-transcription occurs first by binding the epsilon loop on the pgRNA genome, and is initiated by protein priming, thereby the 5'-end of (-)DNA is covalently linked to P protein. Partial (+)DNA is synthesized from the (-)DNA template and generates the relaxed circular DNA (RC-DNA) genome. After budding and infection, the RC-DNA migrates in the nucleus, and is converted into a plasmid-like covalently closed circular DNA (cccDNA). The activity of P protein does not seem to be necessary for cccDNA generation, and is presumably released from (+)DNA by host nuclear DNA repair machinery. The chain is Protein P from Hepatitis B virus genotype C subtype adr (isolate Japan/Nishioka/1983) (HBV-C).